The primary structure comprises 455 residues: N-acetyl-S-(2-succino)cysteine lyase (455 aa).

106-107 (TT) provides a ligand contact to fumarate. Catalysis depends on histidine 154, which acts as the Proton donor/acceptor. Residue arginine 233 participates in fumarate binding. Serine 277 serves as the catalytic Proton donor/acceptor. Fumarate-binding positions include serine 278 and 283–285 (KRN).

The protein belongs to the lyase 1 family.

The enzyme catalyses N-acetyl-S-(2-succino)-L-cysteine = N-acetyl-L-cysteine + fumarate. The protein operates within amino-acid biosynthesis; L-cysteine biosynthesis. Functionally, catalyzes the cleavage of N-acetyl-S-(2-succino)cysteine into fumarate and N-acetylcysteine. Is involved in a S-(2-succino)cysteine (2SC) degradation pathway that allows the bacterium to recover cysteine from 2SC and to detoxify 2SC that may be a toxic metabolite. Can also perform the reverse reaction in vitro, and has minor activity against 2SC and other small molecule thiols. The polypeptide is N-acetyl-S-(2-succino)cysteine lyase (Enterococcus italicus (strain DSM 15952 / CCUG 50447 / LMG 22039 / TP 1.5)).